A 554-amino-acid polypeptide reads, in one-letter code: Glypican-1 (554 aa).

The N-terminal stretch at 1 to 21 is a signal peptide; the sequence is MERLCWGWWWHLGILCLMHWA. 7 disulfide bridges follow: Cys-32–Cys-68, Cys-62–Cys-256, Cys-69–Cys-259, Cys-191–Cys-343, Cys-246–Cys-279, Cys-268–Cys-415, and Cys-272–Cys-401. Residues Asn-79 and Asn-116 are each glycosylated (N-linked (GlcNAc...) asparagine). Residues 346–369 are disordered; it reads PKKTNKGSKSEERRRKGKATQEDK. The segment covering 353–369 has biased composition (basic and acidic residues); that stretch reads SKSEERRRKGKATQEDK. O-linked (Xyl...) (heparan sulfate) serine glycans are attached at residues Ser-486, Ser-488, and Ser-490.

This sequence belongs to the glypican family. O-glycosylated with heparan sulfate side chains.

The protein resides in the cell membrane. It is found in the secreted. It localises to the extracellular space. Its function is as follows. Cell surface proteoglycan that bears heparan sulfate. This is Glypican-1 (gpc1) from Xenopus tropicalis (Western clawed frog).